A 260-amino-acid chain; its full sequence is Ditrans,polycis-undecaprenyl-diphosphate synthase ((2E,6E)-farnesyl-diphosphate specific) (260 aa).

Asp20 is an active-site residue. Asp20 lines the Mg(2+) pocket. Substrate is bound by residues 21 to 24 (GNGR), Trp25, Arg33, His37, and 65 to 67 (SSE). Asn68 functions as the Proton acceptor in the catalytic mechanism. Residues Trp69, Arg71, and Arg188 each contribute to the substrate site. His193 provides a ligand contact to Mg(2+). 194 to 196 (RIS) provides a ligand contact to substrate. A Mg(2+)-binding site is contributed by Glu207.

Belongs to the UPP synthase family. As to quaternary structure, homodimer. Mg(2+) is required as a cofactor.

The enzyme catalyses 8 isopentenyl diphosphate + (2E,6E)-farnesyl diphosphate = di-trans,octa-cis-undecaprenyl diphosphate + 8 diphosphate. Functionally, catalyzes the sequential condensation of isopentenyl diphosphate (IPP) with (2E,6E)-farnesyl diphosphate (E,E-FPP) to yield (2Z,6Z,10Z,14Z,18Z,22Z,26Z,30Z,34E,38E)-undecaprenyl diphosphate (di-trans,octa-cis-UPP). UPP is the precursor of glycosyl carrier lipid in the biosynthesis of bacterial cell wall polysaccharide components such as peptidoglycan and lipopolysaccharide. This Wigglesworthia glossinidia brevipalpis protein is Ditrans,polycis-undecaprenyl-diphosphate synthase ((2E,6E)-farnesyl-diphosphate specific).